The chain runs to 121 residues: uncharacterized protein (121 aa).

It to E.coli YcjD and H.influenzae HI_1162.

This is an uncharacterized protein from Haemophilus influenzae (strain ATCC 51907 / DSM 11121 / KW20 / Rd).